Consider the following 693-residue polypeptide: Elongation factor G (693 aa).

Residues 8 to 282 (EKFRNFGIMA…AVVDYLPSPI (275 aa)) form the tr-type G domain. GTP is bound by residues 17–24 (AHIDAGKT), 81–85 (DTPGH), and 135–138 (NKMD).

The protein belongs to the TRAFAC class translation factor GTPase superfamily. Classic translation factor GTPase family. EF-G/EF-2 subfamily.

The protein resides in the cytoplasm. Its function is as follows. Catalyzes the GTP-dependent ribosomal translocation step during translation elongation. During this step, the ribosome changes from the pre-translocational (PRE) to the post-translocational (POST) state as the newly formed A-site-bound peptidyl-tRNA and P-site-bound deacylated tRNA move to the P and E sites, respectively. Catalyzes the coordinated movement of the two tRNA molecules, the mRNA and conformational changes in the ribosome. The protein is Elongation factor G of Mycoplasmoides gallisepticum (strain R(low / passage 15 / clone 2)) (Mycoplasma gallisepticum).